The sequence spans 150 residues: 3-dehydroquinate dehydratase (150 aa).

Residue tyrosine 26 is the Proton acceptor of the active site. Residues asparagine 77, histidine 83, and aspartate 90 each contribute to the substrate site. Histidine 103 (proton donor) is an active-site residue. Substrate contacts are provided by residues 104-105 and arginine 114; that span reads LS.

The protein belongs to the type-II 3-dehydroquinase family. Homododecamer.

It catalyses the reaction 3-dehydroquinate = 3-dehydroshikimate + H2O. It participates in metabolic intermediate biosynthesis; chorismate biosynthesis; chorismate from D-erythrose 4-phosphate and phosphoenolpyruvate: step 3/7. Its function is as follows. Catalyzes a trans-dehydration via an enolate intermediate. This is 3-dehydroquinate dehydratase from Pseudoalteromonas translucida (strain TAC 125).